Here is a 380-residue protein sequence, read N- to C-terminus: Glucose-1-phosphate adenylyltransferase (380 aa).

Alpha-D-glucose 1-phosphate contacts are provided by residues Gly164, 179–180 (EK), and Ser190.

This sequence belongs to the bacterial/plant glucose-1-phosphate adenylyltransferase family. Homotetramer.

The enzyme catalyses alpha-D-glucose 1-phosphate + ATP + H(+) = ADP-alpha-D-glucose + diphosphate. The protein operates within glycan biosynthesis; glycogen biosynthesis. Functionally, involved in the biosynthesis of ADP-glucose, a building block required for the elongation reactions to produce glycogen. Catalyzes the reaction between ATP and alpha-D-glucose 1-phosphate (G1P) to produce pyrophosphate and ADP-Glc. The sequence is that of Glucose-1-phosphate adenylyltransferase from Lactococcus lactis subsp. lactis (strain IL1403) (Streptococcus lactis).